A 271-amino-acid polypeptide reads, in one-letter code: Mannosyl-3-phosphoglycerate phosphatase (271 aa).

The active-site Nucleophile is the Asp13. Residues Asp13, Asp15, and Asp214 each contribute to the Mg(2+) site.

The protein belongs to the HAD-like hydrolase superfamily. MPGP family. Mg(2+) is required as a cofactor.

The protein localises to the cytoplasm. The catalysed reaction is 2-O-(alpha-D-mannosyl)-3-phosphoglycerate + H2O = (2R)-2-O-(alpha-D-mannosyl)-glycerate + phosphate. The sequence is that of Mannosyl-3-phosphoglycerate phosphatase from Escherichia coli O7:K1 (strain IAI39 / ExPEC).